A 1109-amino-acid polypeptide reads, in one-letter code: Zinc finger E-box-binding homeobox 1 (1109 aa).

Disordered stretches follow at residues 1-106 (MADG…DPNV) and 123-143 (PEED…NGTP). Low complexity predominate over residues 15 to 30 (PRRNNVTNYNTVVEAN). Residues Ser31 and Ser33 each carry the phosphoserine modification. The segment covering 87–98 (VKDDECDSDAEN) has biased composition (acidic residues). The C2H2-type 1 zinc-finger motif lies at 150-173 (LTCPYCDRGYKRFTSLKEHIKYRH). Residues Lys166 and Lys175 each participate in a glycyl lysine isopeptide (Lys-Gly) (interchain with G-Cter in SUMO2) cross-link. C2H2-type zinc fingers lie at residues 180–202 (FSCS…MTSH) and 220–242 (FKCT…LRIH). The C2H2-type 4; atypical zinc finger occupies 248–272 (YECPNCKKRFSHSGSYSSHISSKKC). The interval 278-307 (VNGRPRSGLKTSQCSSPSLSTSPGSPTRPQ) is disordered. Lys287 participates in a covalent cross-link: Glycyl lysine isopeptide (Lys-Gly) (interchain with G-Cter in SUMO2). Positions 288–304 (TSQCSSPSLSTSPGSPT) are enriched in low complexity. Phosphoserine occurs at positions 293 and 302. Glycyl lysine isopeptide (Lys-Gly) (interchain with G-Cter in SUMO2) cross-links involve residues Lys311 and Lys315. Lys327 participates in a covalent cross-link: Glycyl lysine isopeptide (Lys-Gly) (interchain with G-Cter in SUMO); alternate. Lys327 participates in a covalent cross-link: Glycyl lysine isopeptide (Lys-Gly) (interchain with G-Cter in SUMO2); alternate. Residues Lys419, Lys473, Lys484, Lys495, and Lys528 each participate in a glycyl lysine isopeptide (Lys-Gly) (interchain with G-Cter in SUMO2) cross-link. Disordered regions lie at residues 468–501 (VPQN…KDKS), 525–566 (PELK…SQPP), and 614–711 (QIPG…PQVE). The segment covering 483 to 501 (CKSEKSPEDLTVKSEKDKS) has biased composition (basic and acidic residues). The homeobox; atypical DNA-binding region spans 559-618 (DLSPSQPPLKNLLSLLKAYYALNAQPSTEELTKIADSVNLPLDVVKKWFEKMQAGQIPGQ). The span at 654–665 (RGQSPLKMTSSP) shows a compositional bias: polar residues. Phosphoserine occurs at positions 657, 664, 671, and 678. The span at 673–703 (INGSRSCTSSPSPLNLSSARNPQGYSCVSEG) shows a compositional bias: polar residues. Thr680 carries the phosphothreonine modification. The residue at position 682 (Ser682) is a Phosphoserine. Lys752 is covalently cross-linked (Glycyl lysine isopeptide (Lys-Gly) (interchain with G-Cter in SUMO); alternate). A Glycyl lysine isopeptide (Lys-Gly) (interchain with G-Cter in SUMO2); alternate cross-link involves residue Lys752. The segment at 834 to 873 (PPVKVIQPNGNQDERQDTSSEGVSVEDQNDSDCTPPKKKT) is disordered. 2 C2H2-type zinc fingers span residues 881 to 903 (YACD…KYEH) and 909 to 931 (HECG…MRLH). The segment at 937 to 958 (YQCDKCGKRFSHSGSYSQHMNH) adopts a C2H2-type 7; atypical zinc-finger fold. The tract at residues 968–1109 (EDRDAMEQED…RLSEEKTNEA (142 aa)) is disordered. The segment covering 1012–1066 (EEDEDSEKEEEEEDKEMEELQEDKECENPQEEEEEEEEEEEEEEEEEEEEAEEAE) has biased composition (acidic residues). Low complexity predominate over residues 1071–1087 (AAKTGGAVEEEAAQQAG). Over residues 1097–1109 (ESKRLSEEKTNEA) the composition is skewed to basic and acidic residues.

Belongs to the delta-EF1/ZFH-1 C2H2-type zinc-finger family. In terms of assembly, interacts (via N-terminus) with SMARCA4/BRG1. In terms of processing, ubiquitinated, leading to degradation in a proteasome-dependent manner. Deubiquitinated by USP51, leading to stabilization.

Its subcellular location is the nucleus. Its function is as follows. Acts as a transcriptional repressor. Binds to E-box sequences in the immunoglobulin heavy chain enhancer as well as in the regulatory regions of many other tissue-specific genes. Represses E-cadherin promoter and induces an epithelial-mesenchymal transition (EMT) by recruiting SMARCA4/BRG1. Represses BCL6 transcription in the presence of the corepressor CTBP1. Positively regulates neuronal differentiation. Represses RCOR1 transcription activation during neurogenesis. Represses transcription by binding to the E box (5'-CANNTG-3'). In the absence of TGFB1, acts as a repressor of COL1A2 transcription via binding to the E-box in the upstream enhancer region. The protein is Zinc finger E-box-binding homeobox 1 of Rattus norvegicus (Rat).